The primary structure comprises 324 residues: DNA repair and recombination protein RadA (324 aa).

114 to 121 (GEFGSGKT) provides a ligand contact to ATP.

Belongs to the eukaryotic RecA-like protein family.

Its function is as follows. Involved in DNA repair and in homologous recombination. Binds and assemble on single-stranded DNA to form a nucleoprotein filament. Hydrolyzes ATP in a ssDNA-dependent manner and promotes DNA strand exchange between homologous DNA molecules. The chain is DNA repair and recombination protein RadA from Metallosphaera sedula (strain ATCC 51363 / DSM 5348 / JCM 9185 / NBRC 15509 / TH2).